The sequence spans 1791 residues: Sodium channel protein type 11 subunit alpha (1791 aa).

Over 1 to 126 the chain is Cytoplasmic; sequence MDDRCYPVIF…SIRSLAIRVS (126 aa). The stretch at 115 to 408 is one I repeat; sequence FNSIRSLAIR…VTMAYEEQNK (294 aa). A helical membrane pass occupies residues 127–148; the sequence is VHSLFSMFIIGTVIINCVFMAT. Over 149 to 156 the chain is Extracellular; sequence GPAKNSNS. The helical transmembrane segment at 157 to 180 threads the bilayer; sequence NNTDIAECVFTGIYIFEALIKILA. Residues 181-192 lie on the Cytoplasmic side of the membrane; that stretch reads RGFILDEFSFLR. The helical transmembrane segment at 193-212 threads the bilayer; it reads DPWNWLDSIVIGIAIVSYIP. Over 213–219 the chain is Extracellular; that stretch reads GITIKLL. The chain crosses the membrane as a helical; Voltage-sensor span at residues 220 to 239; sequence PLRTFRVFRALKAISVVSRL. Over 240-255 the chain is Cytoplasmic; sequence KVIVGALLRSVKKLVN. Residues 256 to 269 form a helical membrane-spanning segment; sequence VIILTFFCLSIFAL. Topologically, residues 270–344 are extracellular; sequence VGQQLFMGSL…PDYNYTNFDN (75 aa). Cys-283 and Cys-322 are oxidised to a cystine. N-linked (GlcNAc...) asparagine glycans are attached at residues Asn-290 and Asn-338. Residues 345-369 constitute an intramembrane region (pore-forming); the sequence is FGWSFLAMFRLMTQDSWEKLYQQTL. Over 370–376 the chain is Extracellular; sequence RTTGLYS. The chain crosses the membrane as a helical span at residues 377 to 402; that stretch reads VFFFIVVIFLGSFYLINLTLAVVTMA. Over 403-572 the chain is Cytoplasmic; it reads YEEQNKNVAA…WLCVKKVLRT (170 aa). One copy of the II repeat lies at 559–833; that stretch reads CCPQWLCVKK…EGEARKTKVQ (275 aa). The chain crosses the membrane as a helical span at residues 573–596; the sequence is VMTDPFTELAITICIIINTVFLAM. Topologically, residues 597-607 are extracellular; sequence EHHKMEASFEK. A helical transmembrane segment spans residues 608–631; sequence MLNIGNLVFTSIFIAEMCLKIIAL. Over 632-639 the chain is Cytoplasmic; the sequence is DPYHYFRR. The helical transmembrane segment at 640 to 659 threads the bilayer; the sequence is GWNIFDSIVALLSFADVMNC. Residues 660–667 lie on the Extracellular side of the membrane; the sequence is VLQKRSWP. A helical; Voltage-sensor transmembrane segment spans residues 668-687; sequence FLRSFRVLRVFKLAKSWPTL. Residues 688–702 lie on the Cytoplasmic side of the membrane; that stretch reads NTLIKIIGNSVGALG. A helical membrane pass occupies residues 703–725; that stretch reads SLTVVLVIVIFIFSVVGMQLFGR. Topologically, residues 726–753 are extracellular; it reads SFNSQKSPKLCNPTGPTVSCLRHWHMGD. Positions 754-774 form an intramembrane region, pore-forming; sequence FWHSFLVVFRILCGEWIENMW. At 775–785 the chain is on the extracellular side; it reads ECMQEANASSS. The cysteines at positions 776 and 787 are disulfide-linked. N-linked (GlcNAc...) asparagine glycosylation is present at Asn-781. A helical membrane pass occupies residues 786 to 811; the sequence is LCVIVFILITVIGKLVVLNLFIALLL. Over 812–1051 the chain is Cytoplasmic; sequence NSFSNEERNG…WWNLRKTCYQ (240 aa). One copy of the III repeat lies at 1044 to 1339; it reads NLRKTCYQIV…KKYYNAMKKL (296 aa). A helical transmembrane segment spans residues 1052 to 1074; the sequence is IVKHSWFESFIIFVILLSSGALI. The Extracellular portion of the chain corresponds to 1075 to 1088; the sequence is FEDVHLENQPKIQE. The chain crosses the membrane as a helical span at residues 1089-1114; it reads LLNCTDIIFTHIFILEMVLKWVAFGF. The Cytoplasmic portion of the chain corresponds to 1115–1120; it reads GKYFTS. A helical membrane pass occupies residues 1121–1138; that stretch reads AWCCLDFIIVIVSVTTLI. A topological domain (extracellular) is located at residue Asn-1139. A helical; Voltage-sensor transmembrane segment spans residues 1140–1161; sequence LMELKSFRTLRALRPLRALSQF. Over 1162-1180 the chain is Cytoplasmic; sequence EGMKVVVNALIGAIPAILN. A helical membrane pass occupies residues 1181–1202; the sequence is VLLVCLIFWLVFCILGVYFFSG. Residues 1203 to 1243 lie on the Extracellular side of the membrane; it reads KFGKCINGTDSVINYTIITNKSQCESGNFSWINQKVNFDNV. N-linked (GlcNAc...) asparagine glycans are attached at residues Asn-1209, Asn-1216, Asn-1222, and Asn-1230. Residues 1244–1265 constitute an intramembrane region (pore-forming); sequence GNAYLALLQVATFKGWMDIIYA. Over 1266–1281 the chain is Extracellular; it reads AVDSTEKEQQPEFESN. Residues 1282–1308 traverse the membrane as a helical segment; the sequence is SLGYIYFVVFIIFGSFFTLNLFIGVII. At 1309–1361 the chain is on the cytoplasmic side; it reads DNFNQQQKKLGGQDIFMTEEQKKYYNAMKKLGSKKPQKPIPRPLNKCQGLVFD. Residues 1348–1639 form an IV repeat; sequence IPRPLNKCQG…WEKFDPEATQ (292 aa). Residues 1362-1385 form a helical membrane-spanning segment; the sequence is IVTSQIFDIIIISLIILNMISMMA. At 1386–1396 the chain is on the extracellular side; sequence ESYNQPKAMKS. A helical transmembrane segment spans residues 1397 to 1420; that stretch reads ILDHLNWVFVVIFTLECLIKIFAL. Over 1421–1426 the chain is Cytoplasmic; the sequence is RQYYFT. A helical membrane pass occupies residues 1427–1450; that stretch reads NGWNLFDCVVVLLSIVSTMISTLE. Over 1451 to 1461 the chain is Extracellular; the sequence is NQEHIPFPPTL. A helical; Voltage-sensor membrane pass occupies residues 1462 to 1484; it reads FRIVRLARIGRILRLVRAARGIR. Residues 1485–1499 are Cytoplasmic-facing; it reads TLLFALMMSLPSLFN. The helical transmembrane segment at 1500 to 1522 threads the bilayer; sequence IGLLLFLIMFIYAILGMNWFSKV. The Extracellular segment spans residues 1523–1536; it reads NPESGIDDIFNFKT. An intramembrane region (pore-forming) is located at residues 1537-1559; that stretch reads FASSMLCLFQISTSAGWDSLLSP. Residues 1560–1579 lie on the Extracellular side of the membrane; that stretch reads MLRSKESCNSSSENCHLPGI. A glycan (N-linked (GlcNAc...) asparagine) is linked at Asn-1568. The helical transmembrane segment at 1580–1604 threads the bilayer; the sequence is ATSYFVSYIIISFLIVVNMYIAVIL. The Cytoplasmic portion of the chain corresponds to 1605 to 1791; the sequence is ENFNTATEES…GVAKGKVHCD (187 aa).

Belongs to the sodium channel (TC 1.A.1.10) family. Nav1.9/SCN11A subfamily. In terms of assembly, the voltage-resistant sodium channel consists of an ion conducting pore forming alpha-subunit regulated by one or more auxiliary subunits SCN1B, SCN2B and SCN3B. Expressed in the dorsal root ganglia and trigeminal ganglia, olfactory bulb, hippocampus, cerebellar cortex, spinal cord, spleen, small intestine and placenta.

The protein resides in the cell membrane. The enzyme catalyses Na(+)(in) = Na(+)(out). Activity is not sensitive to inhibition by tetrodotoxin. Functionally, sodium channel mediating the voltage-dependent sodium ion permeability of excitable membranes. Assuming opened or closed conformations in response to the voltage difference across the membrane, the protein forms a sodium-selective channel through which sodium ions may pass in accordance with their electrochemical gradient. Involved in membrane depolarization during action potential in nociceptors which function as key relay stations for the electrical transmission of pain signals from the periphery to the central nervous system. Also involved in rapid BDNF-evoked neuronal depolarization. This chain is Sodium channel protein type 11 subunit alpha, found in Homo sapiens (Human).